An 854-amino-acid polypeptide reads, in one-letter code: DNA topoisomerase 1 type prokaryotic (854 aa).

One can recognise a Toprim domain in the interval serine 2 to lysine 110. Residues glutamate 8 and aspartate 79 each coordinate Mg(2+). The Topo IA-type catalytic domain maps to aspartate 124–valine 610. Residues serine 158 to glutamine 163 are interaction with DNA. The active-site O-(5'-phospho-DNA)-tyrosine intermediate is the tyrosine 302. Positions lysine 802 to lysine 854 are disordered. The segment covering lysine 814–serine 834 has biased composition (low complexity). Positions threonine 835 to lysine 854 are enriched in basic residues.

The protein belongs to the type IA topoisomerase family. Mg(2+) is required as a cofactor.

The protein localises to the virion. The catalysed reaction is ATP-independent breakage of single-stranded DNA, followed by passage and rejoining.. Its function is as follows. Releases the supercoiling and torsional tension of DNA, which is introduced during the DNA replication and transcription, by transiently cleaving and rejoining one strand of the DNA duplex. Introduces a single-strand break via transesterification at a target site in duplex DNA. The scissile phosphodiester is attacked by the catalytic tyrosine of the enzyme, resulting in the formation of a DNA-(5'-phosphotyrosyl)-enzyme intermediate and the expulsion of a 3'-OH DNA strand. The free DNA strand then undergoes passage around the unbroken strand, thus removing DNA supercoils. Finally, in the religation step, the DNA 3'-OH attacks the covalent intermediate to expel the active-site tyrosine and restore the DNA phosphodiester backbone. The sequence is that of DNA topoisomerase 1 type prokaryotic (TOP1P) from Acanthamoeba polyphaga (Amoeba).